Here is a 142-residue protein sequence, read N- to C-terminus: Large ribosomal subunit protein uL11 (142 aa).

The protein belongs to the universal ribosomal protein uL11 family. As to quaternary structure, part of the ribosomal stalk of the 50S ribosomal subunit. Interacts with L10 and the large rRNA to form the base of the stalk. L10 forms an elongated spine to which L12 dimers bind in a sequential fashion forming a multimeric L10(L12)X complex. One or more lysine residues are methylated.

Its function is as follows. Forms part of the ribosomal stalk which helps the ribosome interact with GTP-bound translation factors. This chain is Large ribosomal subunit protein uL11, found in Maricaulis maris (strain MCS10) (Caulobacter maris).